A 101-amino-acid chain; its full sequence is Small ribosomal subunit protein uS14 (101 aa).

This sequence belongs to the universal ribosomal protein uS14 family. Part of the 30S ribosomal subunit. Contacts proteins S3 and S10.

Functionally, binds 16S rRNA, required for the assembly of 30S particles and may also be responsible for determining the conformation of the 16S rRNA at the A site. This Chlamydia muridarum (strain MoPn / Nigg) protein is Small ribosomal subunit protein uS14.